The primary structure comprises 314 residues: MEITFLGTSSGVPTRSRNVSSVALRLPQRAEVWLFDCGEGTQHQLLRSDVKISQITRIFITHMHGDHIYGLMGLLASCGLAGNAQDIEIYGPPDLIDYLKACAKYSQVKLSHRVRVYGVRPGILYEDEEFTVSCGLLKHRIPAFGYRIAEKNRPGRFDVEKATALGIPPGPIYGQLKRGEVVTLPDGRRINGKDLCGETETGRKVIYCTDTVFCDGAVELAQDGDVLIHEATFAHQDAQLAFDRLHSTSTMAAQVALIAGVKQLIMTHFSPRYAPGNVLQLDDLLAEAKAIFANTILARDFMTYEVPRLRRKTE.

7 residues coordinate Zn(2+): histidine 62, histidine 64, aspartate 66, histidine 67, histidine 139, aspartate 210, and histidine 268. Aspartate 66 (proton acceptor) is an active-site residue.

This sequence belongs to the RNase Z family. In terms of assembly, homodimer. Zn(2+) serves as cofactor.

The catalysed reaction is Endonucleolytic cleavage of RNA, removing extra 3' nucleotides from tRNA precursor, generating 3' termini of tRNAs. A 3'-hydroxy group is left at the tRNA terminus and a 5'-phosphoryl group is left at the trailer molecule.. In terms of biological role, zinc phosphodiesterase, which displays some tRNA 3'-processing endonuclease activity. Probably involved in tRNA maturation, by removing a 3'-trailer from precursor tRNA. In Rippkaea orientalis (strain PCC 8801 / RF-1) (Cyanothece sp. (strain PCC 8801)), this protein is Ribonuclease Z.